A 57-amino-acid chain; its full sequence is Large ribosomal subunit protein uL30 (57 aa).

It belongs to the universal ribosomal protein uL30 family. In terms of assembly, part of the 50S ribosomal subunit.

The sequence is that of Large ribosomal subunit protein uL30 from Clostridium acetobutylicum (strain ATCC 824 / DSM 792 / JCM 1419 / IAM 19013 / LMG 5710 / NBRC 13948 / NRRL B-527 / VKM B-1787 / 2291 / W).